The chain runs to 173 residues: Alpha-crystallin A chain (173 aa).

N-acetylmethionine is present on Met-1. Residues 1–63 (MDVTIQHPWF…RTVLDSGISE (63 aa)) form a required for complex formation with BFSP1 and BFSP2 region. At Gln-6 the chain carries Deamidated glutamine; partial. The residue at position 45 (Ser-45) is a Phosphoserine. 2 positions are modified to deamidated glutamine; partial: Gln-50 and Gln-90. The sHSP domain maps to 52–162 (LFRTVLDSGI…SHSERAIPVS (111 aa)). Lys-99 carries the post-translational modification N6-acetyllysine. His-100 is a Zn(2+) binding site. Asn-101 bears the Deamidated asparagine; partial mark. Zn(2+)-binding residues include Glu-102 and His-107. At Ser-122 the chain carries Phosphoserine. At Asn-123 the chain carries Deamidated asparagine; partial. Residues Cys-131 and Cys-142 are joined by a disulfide bond. Gln-147 carries the deamidated glutamine; partial modification. Positions 149-173 (GMDASHSERAIPVSREEKPSSAPSS) are disordered. The span at 153-167 (SHSERAIPVSREEKP) shows a compositional bias: basic and acidic residues. His-154 is a binding site for Zn(2+). Residue Ser-162 is glycosylated (O-linked (GlcNAc) serine).

The protein belongs to the small heat shock protein (HSP20) family. As to quaternary structure, heteromer composed of three CRYAA and one CRYAB subunits. Inter-subunit bridging via zinc ions enhances stability, which is crucial as there is no protein turn over in the lens. Can also form homodimers and homotetramers (dimers of dimers) which serve as the building blocks of homooligomers. Within homooligomers, the zinc-binding motif is created from residues of 3 different molecules. His-100 and Glu-102 from one molecule are ligands of the zinc ion, and His-107 and His-154 residues from additional molecules complete the site with tetrahedral coordination geometry. Part of a complex required for lens intermediate filament formation composed of BFSP1, BFSP2 and CRYAA. Undergoes age-dependent proteolytical cleavage at the C-terminus.

Its subcellular location is the cytoplasm. It localises to the nucleus. Functionally, contributes to the transparency and refractive index of the lens. In its oxidized form (absence of intramolecular disulfide bond), acts as a chaperone, preventing aggregation of various proteins under a wide range of stress conditions. Required for the correct formation of lens intermediate filaments as part of a complex composed of BFSP1, BFSP2 and CRYAA. The protein is Alpha-crystallin A chain (CRYAA) of Loxodonta africana (African elephant).